The following is a 194-amino-acid chain: 3-isopropylmalate dehydratase small subunit (194 aa).

This sequence belongs to the LeuD family. LeuD type 1 subfamily. Heterodimer of LeuC and LeuD.

It catalyses the reaction (2R,3S)-3-isopropylmalate = (2S)-2-isopropylmalate. Its pathway is amino-acid biosynthesis; L-leucine biosynthesis; L-leucine from 3-methyl-2-oxobutanoate: step 2/4. Catalyzes the isomerization between 2-isopropylmalate and 3-isopropylmalate, via the formation of 2-isopropylmaleate. This chain is 3-isopropylmalate dehydratase small subunit, found in Anoxybacillus flavithermus (strain DSM 21510 / WK1).